We begin with the raw amino-acid sequence, 430 residues long: Small ribosomal subunit protein uS5m (430 aa).

An S5 DRBM domain is found at 218-282; sequence FDTRILEVRN…NRAVHHLHYI (65 aa).

It belongs to the universal ribosomal protein uS5 family. Component of the mitochondrial small ribosomal subunit (mt-SSU). Mature mammalian 55S mitochondrial ribosomes consist of a small (28S) and a large (39S) subunit. The 28S small subunit contains a 12S ribosomal RNA (12S mt-rRNA) and 30 different proteins. The 39S large subunit contains a 16S rRNA (16S mt-rRNA), a copy of mitochondrial valine transfer RNA (mt-tRNA(Val)), which plays an integral structural role, and 52 different proteins.

It is found in the mitochondrion. The chain is Small ribosomal subunit protein uS5m (MRPS5) from Homo sapiens (Human).